A 273-amino-acid chain; its full sequence is Large ribosomal subunit protein uL2c (273 aa).

Belongs to the universal ribosomal protein uL2 family. Part of the 50S ribosomal subunit.

Its subcellular location is the plastid. The protein resides in the apicoplast. The sequence is that of Large ribosomal subunit protein uL2c (rpl2) from Eimeria tenella (Coccidian parasite).